The following is a 250-amino-acid chain: Electron transfer flavoprotein subunit beta (250 aa).

This sequence belongs to the ETF beta-subunit/FixA family. Heterodimer of an alpha and a beta subunit. FAD is required as a cofactor. The cofactor is AMP.

The protein localises to the mitochondrion matrix. Functionally, the electron transfer flavoprotein serves as a specific electron acceptor for several dehydrogenases, including five acyl-CoA dehydrogenases, glutaryl-CoA and sarcosine dehydrogenase. It transfers the electrons to the main mitochondrial respiratory chain via ETF-ubiquinone oxidoreductase (ETF dehydrogenase). This is Electron transfer flavoprotein subunit beta (etfb) from Dictyostelium discoideum (Social amoeba).